The primary structure comprises 502 residues: Glycerol kinase (502 aa).

Thr-14 is an ADP binding site. ATP contacts are provided by Thr-14, Thr-15, and Ser-16. Sn-glycerol 3-phosphate is bound at residue Thr-14. Arg-18 is an ADP binding site. The sn-glycerol 3-phosphate site is built by Arg-84, Glu-85, Tyr-136, and Asp-246. 5 residues coordinate glycerol: Arg-84, Glu-85, Tyr-136, Asp-246, and Gln-247. Positions 268 and 311 each coordinate ADP. ATP is bound by residues Thr-268, Gly-311, Gln-315, and Gly-412. Positions 412 and 416 each coordinate ADP.

Belongs to the FGGY kinase family. Homotetramer and homodimer (in equilibrium). Heterodimer with EIIA-Glc. Binds 1 zinc ion per glycerol kinase EIIA-Glc dimer. The zinc ion is important for dimerization.

The enzyme catalyses glycerol + ATP = sn-glycerol 3-phosphate + ADP + H(+). It participates in polyol metabolism; glycerol degradation via glycerol kinase pathway; sn-glycerol 3-phosphate from glycerol: step 1/1. With respect to regulation, activity of this regulatory enzyme is affected by several metabolites. Allosterically and non-competitively inhibited by fructose 1,6-bisphosphate (FBP) and unphosphorylated phosphocarrier protein EIIA-Glc (III-Glc), an integral component of the bacterial phosphotransferase (PTS) system. Key enzyme in the regulation of glycerol uptake and metabolism. Catalyzes the phosphorylation of glycerol to yield sn-glycerol 3-phosphate. The chain is Glycerol kinase from Citrobacter koseri (strain ATCC BAA-895 / CDC 4225-83 / SGSC4696).